The chain runs to 202 residues: Interleukin-17D (202 aa).

An N-terminal signal peptide occupies residues 1 to 15; that stretch reads MLVAGFLLALPPSWA. The interval 65 to 85 is disordered; sequence QARNASCPAGGRPADRRFRPP. 2 N-linked (GlcNAc...) asparagine glycosylation sites follow: asparagine 68 and asparagine 181.

The protein belongs to the IL-17 family. Expressed preferentially in adipose, skeletal muscle and CNS.

The protein resides in the secreted. Induces expression of IL6, CXCL8/IL8, and CSF2/GM-CSF from endothelial cells. This is Interleukin-17D (IL17D) from Homo sapiens (Human).